We begin with the raw amino-acid sequence, 238 residues long: Uroporphyrinogen-III C-methyltransferase (238 aa).

S-adenosyl-L-homocysteine-binding positions include Pro-11, 87–89 (GGD), 117–118 (TS), and Met-170.

This sequence belongs to the precorrin methyltransferase family. As to quaternary structure, monomer.

It carries out the reaction uroporphyrinogen III + 2 S-adenosyl-L-methionine = precorrin-2 + 2 S-adenosyl-L-homocysteine + H(+). Its pathway is cofactor biosynthesis; adenosylcobalamin biosynthesis; precorrin-2 from uroporphyrinogen III: step 1/1. The protein operates within porphyrin-containing compound metabolism; siroheme biosynthesis; precorrin-2 from uroporphyrinogen III: step 1/1. Its activity is regulated as follows. SUMT exhibits a substrate inhibition phenomenon at uroporphyrinogen III concentrations above 0.5 uM; this property might play a regulatory role in cobalamin biosynthesis. Functionally, catalyzes the two successive C-2 and C-7 methylation reactions involved in the conversion of uroporphyrinogen III to precorrin-2 via the intermediate formation of precorrin-1. It is a step in the biosynthesis of both cobalamin (vitamin B12) and siroheme. This Priestia megaterium (Bacillus megaterium) protein is Uroporphyrinogen-III C-methyltransferase.